Here is a 172-residue protein sequence, read N- to C-terminus: ATP synthase subunit b (172 aa).

The helical transmembrane segment at 12–32 (VGFNAGTMLFQLVAMLILLAL) threads the bilayer.

Belongs to the ATPase B chain family. As to quaternary structure, F-type ATPases have 2 components, F(1) - the catalytic core - and F(0) - the membrane proton channel. F(1) has five subunits: alpha(3), beta(3), gamma(1), delta(1), epsilon(1). F(0) has three main subunits: a(1), b(2) and c(10-14). The alpha and beta chains form an alternating ring which encloses part of the gamma chain. F(1) is attached to F(0) by a central stalk formed by the gamma and epsilon chains, while a peripheral stalk is formed by the delta and b chains.

The protein localises to the cell membrane. In terms of biological role, f(1)F(0) ATP synthase produces ATP from ADP in the presence of a proton or sodium gradient. F-type ATPases consist of two structural domains, F(1) containing the extramembraneous catalytic core and F(0) containing the membrane proton channel, linked together by a central stalk and a peripheral stalk. During catalysis, ATP synthesis in the catalytic domain of F(1) is coupled via a rotary mechanism of the central stalk subunits to proton translocation. Functionally, component of the F(0) channel, it forms part of the peripheral stalk, linking F(1) to F(0). The polypeptide is ATP synthase subunit b (Bacillus licheniformis (strain ATCC 14580 / DSM 13 / JCM 2505 / CCUG 7422 / NBRC 12200 / NCIMB 9375 / NCTC 10341 / NRRL NRS-1264 / Gibson 46)).